We begin with the raw amino-acid sequence, 309 residues long: DSC E3 ubiquitin ligase complex subunit C (309 aa).

N-linked (GlcNAc...) asparagine glycosylation occurs at asparagine 61. 2 disordered regions span residues 88–110 and 148–177; these read LPPS…GKGK and EQAD…FDRL. The next 2 helical transmembrane spans lie at 257–277 and 289–309; these read DDML…AMWL and GLAV…RIMN.

This sequence belongs to the dsc3 family. Component of the DSC E3 ubiquitin ligase complex composed of dscA, dscB, dscC and dscD.

Its subcellular location is the endoplasmic reticulum membrane. Its pathway is protein modification; protein ubiquitination. Functionally, component of the DSC E3 ubiquitin ligase complex which is required for the srbA transcriptional activator proteolytic cleavage to release the soluble transcription factor from the membrane in low oxygen or sterol conditions. Required for growth during hypoxia and triazole drug susceptibility, as well as for virulence in a murine model of invasive pulmonary aspergillosis (IPA). This Aspergillus fumigatus (strain ATCC MYA-4609 / CBS 101355 / FGSC A1100 / Af293) (Neosartorya fumigata) protein is DSC E3 ubiquitin ligase complex subunit C.